A 276-amino-acid polypeptide reads, in one-letter code: 3-methyl-2-oxobutanoate hydroxymethyltransferase (276 aa).

Positions 45 and 84 each coordinate Mg(2+). 3-methyl-2-oxobutanoate contacts are provided by residues 45–46 (DS), D84, and K114. E116 contacts Mg(2+). The active-site Proton acceptor is the E183.

The protein belongs to the PanB family. Homodecamer; pentamer of dimers. Requires Mg(2+) as cofactor.

The protein localises to the cytoplasm. The catalysed reaction is 3-methyl-2-oxobutanoate + (6R)-5,10-methylene-5,6,7,8-tetrahydrofolate + H2O = 2-dehydropantoate + (6S)-5,6,7,8-tetrahydrofolate. It functions in the pathway cofactor biosynthesis; (R)-pantothenate biosynthesis; (R)-pantoate from 3-methyl-2-oxobutanoate: step 1/2. Functionally, catalyzes the reversible reaction in which hydroxymethyl group from 5,10-methylenetetrahydrofolate is transferred onto alpha-ketoisovalerate to form ketopantoate. The polypeptide is 3-methyl-2-oxobutanoate hydroxymethyltransferase (Carboxydothermus hydrogenoformans (strain ATCC BAA-161 / DSM 6008 / Z-2901)).